We begin with the raw amino-acid sequence, 493 residues long: Galactose-1-phosphate uridylyltransferase (493 aa).

This sequence belongs to the galactose-1-phosphate uridylyltransferase type 2 family.

Its subcellular location is the cytoplasm. The catalysed reaction is alpha-D-galactose 1-phosphate + UDP-alpha-D-glucose = alpha-D-glucose 1-phosphate + UDP-alpha-D-galactose. Its pathway is carbohydrate metabolism; galactose metabolism. The sequence is that of Galactose-1-phosphate uridylyltransferase from Lactococcus lactis subsp. cremoris (strain SK11).